A 264-amino-acid polypeptide reads, in one-letter code: tRNA (guanine-N(1)-)-methyltransferase (264 aa).

S-adenosyl-L-methionine contacts are provided by residues glycine 125 and 145–150 (LGDFVL).

This sequence belongs to the RNA methyltransferase TrmD family. Homodimer.

The protein localises to the cytoplasm. It catalyses the reaction guanosine(37) in tRNA + S-adenosyl-L-methionine = N(1)-methylguanosine(37) in tRNA + S-adenosyl-L-homocysteine + H(+). In terms of biological role, specifically methylates guanosine-37 in various tRNAs. This is tRNA (guanine-N(1)-)-methyltransferase from Burkholderia mallei (strain NCTC 10247).